The sequence spans 270 residues: Formamidopyrimidine-DNA glycosylase (270 aa).

P2 acts as the Schiff-base intermediate with DNA in catalysis. E3 serves as the catalytic Proton donor. The Proton donor; for beta-elimination activity role is filled by K57. Positions 90, 109, and 150 each coordinate DNA. The FPG-type zinc-finger motif lies at 235-269 (QIYGKKGCPCPKCGQKIESFTVGQRNSYVCLHCQK). Catalysis depends on R259, which acts as the Proton donor; for delta-elimination activity.

This sequence belongs to the FPG family. As to quaternary structure, monomer. It depends on Zn(2+) as a cofactor.

The catalysed reaction is Hydrolysis of DNA containing ring-opened 7-methylguanine residues, releasing 2,6-diamino-4-hydroxy-5-(N-methyl)formamidopyrimidine.. It catalyses the reaction 2'-deoxyribonucleotide-(2'-deoxyribose 5'-phosphate)-2'-deoxyribonucleotide-DNA = a 3'-end 2'-deoxyribonucleotide-(2,3-dehydro-2,3-deoxyribose 5'-phosphate)-DNA + a 5'-end 5'-phospho-2'-deoxyribonucleoside-DNA + H(+). Involved in base excision repair of DNA damaged by oxidation or by mutagenic agents. Acts as a DNA glycosylase that recognizes and removes damaged bases. Has a preference for oxidized purines, such as 7,8-dihydro-8-oxoguanine (8-oxoG). Has AP (apurinic/apyrimidinic) lyase activity and introduces nicks in the DNA strand. Cleaves the DNA backbone by beta-delta elimination to generate a single-strand break at the site of the removed base with both 3'- and 5'-phosphates. In Actinobacillus succinogenes (strain ATCC 55618 / DSM 22257 / CCUG 43843 / 130Z), this protein is Formamidopyrimidine-DNA glycosylase.